Reading from the N-terminus, the 537-residue chain is Phosphoenolpyruvate carboxykinase (ATP) (537 aa).

Substrate is bound by residues Arg-61, Tyr-195, and Lys-201. Residues Lys-201, His-220, and 236–244 contribute to the ATP site; that span reads GLSGTGKTT. 2 residues coordinate Mn(2+): Lys-201 and His-220. Asp-257 provides a ligand contact to Mn(2+). ATP-binding residues include Glu-285, Arg-323, and Thr-448. Position 323 (Arg-323) interacts with substrate.

Belongs to the phosphoenolpyruvate carboxykinase (ATP) family. It depends on Mn(2+) as a cofactor.

The protein localises to the cytoplasm. The catalysed reaction is oxaloacetate + ATP = phosphoenolpyruvate + ADP + CO2. Its pathway is carbohydrate biosynthesis; gluconeogenesis. Its function is as follows. Involved in the gluconeogenesis. Catalyzes the conversion of oxaloacetate (OAA) to phosphoenolpyruvate (PEP) through direct phosphoryl transfer between the nucleoside triphosphate and OAA. The sequence is that of Phosphoenolpyruvate carboxykinase (ATP) from Azorhizobium caulinodans (strain ATCC 43989 / DSM 5975 / JCM 20966 / LMG 6465 / NBRC 14845 / NCIMB 13405 / ORS 571).